Reading from the N-terminus, the 141-residue chain is Protein stum homolog (141 aa).

Phosphoserine is present on serine 26. Helical transmembrane passes span 51–71 and 87–107; these read FPVA…GTFV and RHVC…VLTA.

It belongs to the SPEC3 family. Stum subfamily.

It is found in the membrane. The sequence is that of Protein stum homolog from Mus musculus (Mouse).